The sequence spans 399 residues: Bombesin receptor subtype-3 (399 aa).

A compositionally biased stretch (polar residues) spans 1-31 (MSQRQPQSPNQTLISTTNDTESSSSVVPNDS). Residues 1–38 (MSQRQPQSPNQTLISTTNDTESSSSVVPNDSTNKRRTG) are disordered. Over 1–41 (MSQRQPQSPNQTLISTTNDTESSSSVVPNDSTNKRRTGDNS) the chain is Extracellular. N-linked (GlcNAc...) asparagine glycosylation is found at N10, N18, and N29. A helical transmembrane segment spans residues 42-63 (PGIEALCAIYITYAVIISVGIL). The Cytoplasmic portion of the chain corresponds to 64 to 82 (GNAILIKVFFKTKSMQTVP). A helical membrane pass occupies residues 83–103 (NIFITSLAFGDLLLLLTCVPV). Residues 104-121 (DVTHYLAEGWLFGRIGCK) are Extracellular-facing. A disulfide bridge links C120 with C203. Residues 122 to 143 (VLSFIRLTSVGVSVFTLTILSA) traverse the membrane as a helical segment. The Cytoplasmic portion of the chain corresponds to 144 to 163 (DRYKAVVKPLERQPPNAILK). A helical transmembrane segment spans residues 164 to 184 (TCAKAGCIWIMSMIIALPEAI). The Extracellular portion of the chain corresponds to 185–220 (FSNVYTFQDPDKNVTFKACASYPVSERLLQEIHSLL). A helical membrane pass occupies residues 221–241 (CFLVFYIIPLSIISVYYSLIA). The Cytoplasmic segment spans residues 242-272 (RTLYKSTLNIPTEEQRHARKQIESRKRIAKT). A helical membrane pass occupies residues 273–293 (VLVLVALFALCWLPNHLLYLY). Over 294–313 (RSFTSQTYMDSSTVHLFVTI) the chain is Extracellular. A helical transmembrane segment spans residues 314-333 (ISRILAFSNSCVNPFALYWL). The Cytoplasmic segment spans residues 334–399 (SNTFQQHFKA…CSVKKEDDRV (66 aa)).

This sequence belongs to the G-protein coupled receptor 1 family. In terms of assembly, interacts with C6orf89.

The protein resides in the cell membrane. Functionally, role in sperm cell division, maturation, or function. This receptor mediates its action by association with G proteins that activate a phosphatidylinositol-calcium second messenger system. This chain is Bombesin receptor subtype-3 (BRS3), found in Ovis aries (Sheep).